The chain runs to 555 residues: Dihydroxy-acid dehydratase (555 aa).

Aspartate 78 lines the Mg(2+) pocket. Cysteine 119 is a binding site for [2Fe-2S] cluster. The Mg(2+) site is built by aspartate 120 and lysine 121. At lysine 121 the chain carries N6-carboxylysine. Cysteine 195 is a binding site for [2Fe-2S] cluster. Glutamate 444 is a binding site for Mg(2+). The active-site Proton acceptor is serine 470.

Belongs to the IlvD/Edd family. In terms of assembly, homodimer. The cofactor is [2Fe-2S] cluster. Mg(2+) is required as a cofactor.

The catalysed reaction is (2R)-2,3-dihydroxy-3-methylbutanoate = 3-methyl-2-oxobutanoate + H2O. The enzyme catalyses (2R,3R)-2,3-dihydroxy-3-methylpentanoate = (S)-3-methyl-2-oxopentanoate + H2O. It functions in the pathway amino-acid biosynthesis; L-isoleucine biosynthesis; L-isoleucine from 2-oxobutanoate: step 3/4. The protein operates within amino-acid biosynthesis; L-valine biosynthesis; L-valine from pyruvate: step 3/4. In terms of biological role, functions in the biosynthesis of branched-chain amino acids. Catalyzes the dehydration of (2R,3R)-2,3-dihydroxy-3-methylpentanoate (2,3-dihydroxy-3-methylvalerate) into 2-oxo-3-methylpentanoate (2-oxo-3-methylvalerate) and of (2R)-2,3-dihydroxy-3-methylbutanoate (2,3-dihydroxyisovalerate) into 2-oxo-3-methylbutanoate (2-oxoisovalerate), the penultimate precursor to L-isoleucine and L-valine, respectively. In Dehalococcoides mccartyi (strain ATCC BAA-2266 / KCTC 15142 / 195) (Dehalococcoides ethenogenes (strain 195)), this protein is Dihydroxy-acid dehydratase.